We begin with the raw amino-acid sequence, 113 residues long: Putative anti-sigma factor antagonist TM1081 homolog (113 aa).

Residues 1–110 form the STAS domain; that stretch reads MFPYKIVEDV…DTISEALEEV (110 aa). Phosphoserine is present on S55.

The protein belongs to the anti-sigma-factor antagonist family. Post-translationally, phosphorylated on a serine residue.

In terms of biological role, in the phosphorylated form it could act as an anti-anti-sigma factor that counteracts an anti-sigma factor and thus releases a sigma factor from inhibition. In Thermotoga neapolitana, this protein is Putative anti-sigma factor antagonist TM1081 homolog.